The sequence spans 385 residues: uncharacterized protein (385 aa).

Belongs to the mycobacterial PPE family.

This is an uncharacterized protein from Mycobacterium tuberculosis (strain CDC 1551 / Oshkosh).